Reading from the N-terminus, the 55-residue chain is Riparin-1.5 acid (55 aa).

The N-terminal stretch at 1-15 is a signal peptide; sequence MKIIVFLAVLMLVSA. The propeptide occupies 16–41; sequence QVCLVSAAEMEHSSDNELSSRDLVKR. Cys47 and Cys53 form a disulfide bridge. Residues 54–55 constitute a propeptide that is removed on maturation; that stretch reads NH.

In terms of tissue distribution, expressed by the skin glands.

The protein resides in the secreted. This Crinia riparia (Streambank froglet) protein is Riparin-1.5 acid.